Here is a 340-residue protein sequence, read N- to C-terminus: Heat-inducible transcription repressor HrcA (340 aa).

The protein belongs to the HrcA family.

Functionally, negative regulator of class I heat shock genes (grpE-dnaK-dnaJ and groELS operons). Prevents heat-shock induction of these operons. The polypeptide is Heat-inducible transcription repressor HrcA (Burkholderia vietnamiensis (strain G4 / LMG 22486) (Burkholderia cepacia (strain R1808))).